A 206-amino-acid polypeptide reads, in one-letter code: Protein 6b (206 aa).

Residues 162-182 (YTEQAEEEEEEEEEEEEEEVL) form a disordered region. Positions 165-182 (QAEEEEEEEEEEEEEEVL) are enriched in acidic residues.

Involved in tumor formation and increases auxin and cytokinin effects in host plants. The sequence is that of Protein 6b (6b) from Allorhizobium ampelinum (strain ATCC BAA-846 / DSM 112012 / S4) (Agrobacterium vitis (strain S4)).